A 344-amino-acid polypeptide reads, in one-letter code: Follistatin (344 aa).

The first 29 residues, 1–29 (MVCARHQPGGLCLLLLLLCQFMEDRSAQA), serve as a signal peptide directing secretion. Residues 30 to 103 (GNCWLRQAKN…TCENVDCGPG (74 aa)) enclose the TB domain. 18 disulfides stabilise this stretch: C32–C55, C42–C88, C56–C91, C95–C106, C100–C116, C118–C150, C122–C143, C132–C164, C168–C179, C173–C189, C192–C225, C196–C218, C207–C239, C245–C256, C250–C267, C270–C302, C274–C295, and C284–C316. Residues 94-117 (TCENVDCGPGKKCRMNKKNKPRCV) enclose the Follistatin-like 1 domain. Residues 112–166 (NKPRCVCAPDCSNITWKGPVCGLDGKTYRNECALLKARCKEQPELEVQYQGKCKK) enclose the Kazal-like 1 domain. A glycan (N-linked (GlcNAc...) asparagine) is linked at N124. The region spanning 167-190 (TCRDVFCPGSSTCVVDQTNNAYCV) is the Follistatin-like 2 domain. One can recognise a Kazal-like 2 domain in the interval 186–241 (NAYCVTCNRICPEPSSSEQSLCGNDGVTYSSACHLRKATCLLGRSIGLAYEGKCIK). The region spanning 244–268 (SCEDIQCGGGKKCLWDFKVGRGRCS) is the Follistatin-like 3 domain. Residues 264 to 318 (RGRCSLCDELCPDSKSDEPVCASDNATYASECAMKEAACSSGVLLEVKHSGSCNS) form the Kazal-like 3 domain. N288 carries an N-linked (GlcNAc...) asparagine glycan. A disordered region spans residues 315 to 344 (SCNSISEETEEEEEEEDQDYSFPISSTLEW). Acidic residues predominate over residues 321-333 (EETEEEEEEEDQD).

In terms of assembly, interacts with GDF11. Interacts with activin A/INHBA. Interacts with myostatin/MSTN.

It localises to the secreted. The protein localises to the nucleus. Its subcellular location is the nucleolus. Multifunctional regulatory protein whose primary function is to antagonize members of the transforming growth factor beta (TGF-beta) superfamily including activin, myostatin, GDF11 or bone morphogenetic proteins (BMPs). Mechanistically, binds to these ligands in the extracellular space, blocking their type II receptor-binding site to inhibit downstream signaling. Plays an essential role in muscle fiber formation and growth both by preventing the repressive effects of myostatin and through SMAD3/AKT/mTOR signaling independently of myostatin. Also promotes neural differentiation by antagonizing the action BMP4. Acts as a specific inhibitor of the biosynthesis and secretion of pituitary follicle stimulating hormone (FSH) by sequestering activin A/INHBA. On the other hand, translocates into the nucleus where it down-regulates rRNA synthesis and ribosome biogenesis to maintain cellular energy homeostasis by binding to rDNA. This is Follistatin from Rattus norvegicus (Rat).